The primary structure comprises 78 residues: UPF0349 protein ABC2936 (78 aa).

It belongs to the UPF0349 family.

The chain is UPF0349 protein ABC2936 from Shouchella clausii (strain KSM-K16) (Alkalihalobacillus clausii).